The sequence spans 239 residues: RNA polymerase sigma-35 factor (239 aa).

Positions 1-27 (MMKLKFYLVYLWYKVLLKLGIKTDEIY) are excised as a propeptide. Residues 86 to 99 (DLISIGTIGLIKAV) carry the Polymerase core binding motif. A DNA-binding region (H-T-H motif) is located at residues 206–225 (QKDVADMLGISQSYISRLEK).

Belongs to the sigma-70 factor family. In terms of processing, proteolytically cleaved in the N-terminus probably by a SpoIIGA homolog to yield the active peptide.

In terms of biological role, sigma factors are initiation factors that promote the attachment of RNA polymerase to specific initiation sites and are then released. This sigma factor directs the transcription of crystal protein genes, a sporulation-regulated event. This Bacillus anthracis protein is RNA polymerase sigma-35 factor (sigE).